A 1938-amino-acid polypeptide reads, in one-letter code: Histone-lysine N-methyltransferase SETD1B (1938 aa).

Over residues 1–20 the composition is skewed to basic and acidic residues; that stretch reads MSFKEAKPGERGKNPEDHGR. Residues 1-44 are disordered; that stretch reads MSFKEAKPGERGKNPEDHGRKQAASWMNGMEAANQPSTSAEKKS. Residues 111-199 enclose the RRM domain; the sequence is DEFYVGPVPP…NIIHAELDTK (89 aa). Disordered regions lie at residues 226 to 357, 369 to 484, 496 to 630, 652 to 688, 916 to 1125, 1147 to 1174, 1187 to 1206, 1327 to 1373, 1413 to 1468, 1496 to 1528, and 1744 to 1772; these read LDAS…ENTF, FPRT…TRIA, LISS…EVTP, GFPP…VPPP, KEPP…SSPV, HQTA…HKQD, MQQN…NEEE, KTLS…GNSL, FPES…VPHM, ECEF…PKKP, and DEPP…RRSE. 4 stretches are compositionally biased toward polar residues: residues 254–290, 298–312, 375–407, and 446–457; these read VTPN…QGTP, PFSQ…QTTP, LSHS…PQTS, and DSTTEQKASFAQ. Over residues 512-531 the composition is skewed to low complexity; that stretch reads SPISSSSSQLSPIPPYSSSS. Composition is skewed to polar residues over residues 532-546 and 569-585; these read HYQD…SSTG and SLCQ…QINQ. Residues 588–599 are compositionally biased toward basic and acidic residues; that stretch reads RKMETLDNKELV. A compositionally biased stretch (acidic residues) spans 619–628; that stretch reads EDMEISDDEV. Acidic residues-rich tracts occupy residues 976 to 990 and 1054 to 1114; these read SEGE…DDGE and DSSD…EDFF. A compositionally biased stretch (basic and acidic residues) spans 1159–1174; that stretch reads KDLDVPLVESKEHKQD. Basic and acidic residues predominate over residues 1329–1343; sequence LSEEELPRTPGRDIL. 2 stretches are compositionally biased toward polar residues: residues 1349–1358 and 1441–1453; these read LGKSQSTETI and EPTS…NSVP. A compositionally biased stretch (pro residues) spans 1454–1464; sequence SPIPFASPPRG. Positions 1751–1765 are enriched in polar residues; sequence QGKSIPAQPQASTRA. Positions 1770–1775 match the RxxxRR motif motif; that stretch reads RSEQRR. The 118-residue stretch at 1799-1916 folds into the SET domain; sequence KKIRFCKSHI…VNEEITYDYK (118 aa). Tyr-1915 lines the S-adenosyl-L-methionine pocket. Residues 1922 to 1938 form the Post-SET domain; that stretch reads VKIPCLCGAENCRGTLN.

The protein belongs to the class V-like SAM-binding methyltransferase superfamily. Component of the SET1B/COMPASS complex.

The protein localises to the nucleus speckle. It localises to the chromosome. The enzyme catalyses L-lysyl(4)-[histone H3] + 3 S-adenosyl-L-methionine = N(6),N(6),N(6)-trimethyl-L-lysyl(4)-[histone H3] + 3 S-adenosyl-L-homocysteine + 3 H(+). Histone methyltransferase that specifically methylates 'Lys-4' of histone H3, when part of the SET1 histone methyltransferase (HMT) complex, but not if the neighboring 'Lys-9' residue is already methylated. H3 'Lys-4' methylation represents a specific tag for epigenetic transcriptional activation. This is Histone-lysine N-methyltransferase SETD1B (setd1b) from Xenopus laevis (African clawed frog).